The chain runs to 82 residues: Small ribosomal subunit protein bS16 (82 aa).

It belongs to the bacterial ribosomal protein bS16 family.

This is Small ribosomal subunit protein bS16 from Psychromonas ingrahamii (strain DSM 17664 / CCUG 51855 / 37).